Here is a 66-residue protein sequence, read N- to C-terminus: DNA-directed RNA polymerase subunit Rpo10 (66 aa).

Zn(2+) is bound by residues C7, C10, C44, and C45.

Belongs to the archaeal Rpo10/eukaryotic RPB10 RNA polymerase subunit family. As to quaternary structure, part of the RNA polymerase complex. It depends on Zn(2+) as a cofactor.

It localises to the cytoplasm. The catalysed reaction is RNA(n) + a ribonucleoside 5'-triphosphate = RNA(n+1) + diphosphate. DNA-dependent RNA polymerase (RNAP) catalyzes the transcription of DNA into RNA using the four ribonucleoside triphosphates as substrates. This is DNA-directed RNA polymerase subunit Rpo10 from Saccharolobus islandicus (strain Y.N.15.51 / Yellowstone #2) (Sulfolobus islandicus).